Consider the following 142-residue polypeptide: Putative pre-16S rRNA nuclease (142 aa).

The protein belongs to the YqgF nuclease family.

Its subcellular location is the cytoplasm. Functionally, could be a nuclease involved in processing of the 5'-end of pre-16S rRNA. This Mesoplasma florum (strain ATCC 33453 / NBRC 100688 / NCTC 11704 / L1) (Acholeplasma florum) protein is Putative pre-16S rRNA nuclease.